Reading from the N-terminus, the 79-residue chain is Sec-independent protein translocase protein TatA (79 aa).

The chain crosses the membrane as a helical span at residues 1 to 21 (MGGISIWQLLIIALIVILLFG). A disordered region spans residues 42 to 79 (AMTSETSEEEKKALEDSQTAQTSQQAEKKPESKDKEQA). The segment covering 57–66 (DSQTAQTSQQ) has biased composition (polar residues). Over residues 67–79 (AEKKPESKDKEQA) the composition is skewed to basic and acidic residues.

It belongs to the TatA/E family. The Tat system comprises two distinct complexes: a TatABC complex, containing multiple copies of TatA, TatB and TatC subunits, and a separate TatA complex, containing only TatA subunits. Substrates initially bind to the TatABC complex, which probably triggers association of the separate TatA complex to form the active translocon.

The protein resides in the cell inner membrane. Functionally, part of the twin-arginine translocation (Tat) system that transports large folded proteins containing a characteristic twin-arginine motif in their signal peptide across membranes. TatA could form the protein-conducting channel of the Tat system. The sequence is that of Sec-independent protein translocase protein TatA from Shewanella denitrificans (strain OS217 / ATCC BAA-1090 / DSM 15013).